The primary structure comprises 687 residues: Glycine--tRNA ligase beta subunit (687 aa).

Belongs to the class-II aminoacyl-tRNA synthetase family. Tetramer of two alpha and two beta subunits.

The protein localises to the cytoplasm. The enzyme catalyses tRNA(Gly) + glycine + ATP = glycyl-tRNA(Gly) + AMP + diphosphate. The sequence is that of Glycine--tRNA ligase beta subunit from Geotalea daltonii (strain DSM 22248 / JCM 15807 / FRC-32) (Geobacter daltonii).